A 215-amino-acid polypeptide reads, in one-letter code: ATP-dependent Clp protease proteolytic subunit 1 (215 aa).

Catalysis depends on serine 108, which acts as the Nucleophile. The active site involves histidine 133.

This sequence belongs to the peptidase S14 family. Fourteen ClpP subunits assemble into 2 heptameric rings which stack back to back to give a disk-like structure with a central cavity, resembling the structure of eukaryotic proteasomes.

The protein localises to the cytoplasm. It carries out the reaction Hydrolysis of proteins to small peptides in the presence of ATP and magnesium. alpha-casein is the usual test substrate. In the absence of ATP, only oligopeptides shorter than five residues are hydrolyzed (such as succinyl-Leu-Tyr-|-NHMec, and Leu-Tyr-Leu-|-Tyr-Trp, in which cleavage of the -Tyr-|-Leu- and -Tyr-|-Trp bonds also occurs).. Functionally, cleaves peptides in various proteins in a process that requires ATP hydrolysis. Has a chymotrypsin-like activity. Plays a major role in the degradation of misfolded proteins. This is ATP-dependent Clp protease proteolytic subunit 1 from Paraburkholderia xenovorans (strain LB400).